Here is a 459-residue protein sequence, read N- to C-terminus: Bifunctional protein GlmU (459 aa).

The interval methionine 1–arginine 229 is pyrophosphorylase. UDP-N-acetyl-alpha-D-glucosamine-binding positions include leucine 8–glycine 11, lysine 22, glutamine 72, glycine 77–threonine 78, glycine 101–aspartate 102, glycine 139, glutamate 154, asparagine 169, and asparagine 227. Residue aspartate 102 coordinates Ca(2+). Mg(2+) is bound at residue aspartate 102. Position 227 (asparagine 227) interacts with Ca(2+). Residue asparagine 227 coordinates Mg(2+). The interval valine 230–asparagine 250 is linker. The N-acetyltransferase stretch occupies residues glycine 251–glutamine 459. UDP-N-acetyl-alpha-D-glucosamine is bound by residues arginine 332 and lysine 350. Histidine 362 serves as the catalytic Proton acceptor. Residues tyrosine 365 and asparagine 376 each coordinate UDP-N-acetyl-alpha-D-glucosamine. Residues alanine 379, asparagine 385–tyrosine 386, serine 404, alanine 422, and arginine 439 each bind acetyl-CoA.

In the N-terminal section; belongs to the N-acetylglucosamine-1-phosphate uridyltransferase family. The protein in the C-terminal section; belongs to the transferase hexapeptide repeat family. Homotrimer. Mg(2+) serves as cofactor. It depends on Ca(2+) as a cofactor.

The protein localises to the cytoplasm. The catalysed reaction is alpha-D-glucosamine 1-phosphate + acetyl-CoA = N-acetyl-alpha-D-glucosamine 1-phosphate + CoA + H(+). It catalyses the reaction N-acetyl-alpha-D-glucosamine 1-phosphate + UTP + H(+) = UDP-N-acetyl-alpha-D-glucosamine + diphosphate. Its pathway is nucleotide-sugar biosynthesis; UDP-N-acetyl-alpha-D-glucosamine biosynthesis; N-acetyl-alpha-D-glucosamine 1-phosphate from alpha-D-glucosamine 6-phosphate (route II): step 2/2. It functions in the pathway nucleotide-sugar biosynthesis; UDP-N-acetyl-alpha-D-glucosamine biosynthesis; UDP-N-acetyl-alpha-D-glucosamine from N-acetyl-alpha-D-glucosamine 1-phosphate: step 1/1. The protein operates within bacterial outer membrane biogenesis; LPS lipid A biosynthesis. Functionally, catalyzes the last two sequential reactions in the de novo biosynthetic pathway for UDP-N-acetylglucosamine (UDP-GlcNAc). The C-terminal domain catalyzes the transfer of acetyl group from acetyl coenzyme A to glucosamine-1-phosphate (GlcN-1-P) to produce N-acetylglucosamine-1-phosphate (GlcNAc-1-P), which is converted into UDP-GlcNAc by the transfer of uridine 5-monophosphate (from uridine 5-triphosphate), a reaction catalyzed by the N-terminal domain. In Streptococcus pneumoniae serotype 4 (strain ATCC BAA-334 / TIGR4), this protein is Bifunctional protein GlmU.